A 92-amino-acid polypeptide reads, in one-letter code: Large ribosomal subunit protein bL28 (92 aa).

This sequence belongs to the bacterial ribosomal protein bL28 family.

The sequence is that of Large ribosomal subunit protein bL28 from Borrelia duttonii (strain Ly).